We begin with the raw amino-acid sequence, 506 residues long: 2,3-bisphosphoglycerate-independent phosphoglycerate mutase (506 aa).

D12 and S63 together coordinate Mn(2+). Residue S63 is the Phosphoserine intermediate of the active site. Residues H122, 151–152 (RD), R182, R188, 253–256 (RADR), and K323 each bind substrate. Mn(2+) is bound by residues D390, H394, D432, H433, and H451.

The protein belongs to the BPG-independent phosphoglycerate mutase family. As to quaternary structure, monomer. Mn(2+) serves as cofactor.

It carries out the reaction (2R)-2-phosphoglycerate = (2R)-3-phosphoglycerate. It participates in carbohydrate degradation; glycolysis; pyruvate from D-glyceraldehyde 3-phosphate: step 3/5. Its function is as follows. Catalyzes the interconversion of 2-phosphoglycerate and 3-phosphoglycerate. The chain is 2,3-bisphosphoglycerate-independent phosphoglycerate mutase from Wolbachia pipientis wMel.